Reading from the N-terminus, the 424-residue chain is CinA-like protein (424 aa).

The protein belongs to the CinA family.

The chain is CinA-like protein from Shewanella woodyi (strain ATCC 51908 / MS32).